Consider the following 284-residue polypeptide: Elongation factor Ts (284 aa).

The tract at residues 80-83 is involved in Mg(2+) ion dislocation from EF-Tu; sequence TDFV.

This sequence belongs to the EF-Ts family.

The protein resides in the cytoplasm. Associates with the EF-Tu.GDP complex and induces the exchange of GDP to GTP. It remains bound to the aminoacyl-tRNA.EF-Tu.GTP complex up to the GTP hydrolysis stage on the ribosome. This is Elongation factor Ts from Neisseria gonorrhoeae (strain ATCC 700825 / FA 1090).